We begin with the raw amino-acid sequence, 166 residues long: Putative tRNA (cytidine(34)-2'-O)-methyltransferase (166 aa).

S-adenosyl-L-methionine-binding residues include Leu-83, Gly-109, Ile-130, and Ser-138.

This sequence belongs to the class IV-like SAM-binding methyltransferase superfamily. RNA methyltransferase TrmH family. TrmL subfamily.

The protein resides in the cytoplasm. The enzyme catalyses cytidine(34) in tRNA + S-adenosyl-L-methionine = 2'-O-methylcytidine(34) in tRNA + S-adenosyl-L-homocysteine + H(+). It carries out the reaction 5-carboxymethylaminomethyluridine(34) in tRNA(Leu) + S-adenosyl-L-methionine = 5-carboxymethylaminomethyl-2'-O-methyluridine(34) in tRNA(Leu) + S-adenosyl-L-homocysteine + H(+). Functionally, could methylate the ribose at the nucleotide 34 wobble position in tRNA. This chain is Putative tRNA (cytidine(34)-2'-O)-methyltransferase, found in Mycoplasma pneumoniae (strain ATCC 29342 / M129 / Subtype 1) (Mycoplasmoides pneumoniae).